Here is a 136-residue protein sequence, read N- to C-terminus: Small ribosomal subunit protein uS9 (136 aa).

It belongs to the universal ribosomal protein uS9 family.

This is Small ribosomal subunit protein uS9 from Borrelia turicatae (strain 91E135).